Consider the following 256-residue polypeptide: 2-aminoethanethiol dioxygenase (256 aa).

Residues His-100, His-102, and His-179 each contribute to the Fe cation site.

As to quaternary structure, monomer. The cofactor is Fe cation. In terms of tissue distribution, ubiquitous, with highest expression in brain, heart and skeletal muscle (at protein level).

The enzyme catalyses cysteamine + O2 = hypotaurine + H(+). It carries out the reaction N-terminal L-cysteinyl-[protein] + O2 = N-terminal S-hydroxy-S-oxy-L-cysteinyl-[protein] + H(+). Functionally, plays a vital role in regulating thiol metabolism and preserving oxygen homeostasis by oxidizing the sulfur of cysteamine and N-terminal cysteine-containing proteins to their corresponding sulfinic acids using O2 as a cosubstrate. Catalyzes the oxidation of cysteamine (2-aminoethanethiol) to hypotaurine. Catalyzes the oxidation of the regulator of G-protein signaling 5 (RGS5). Also oxidizes proteins RGS4 and interleukin-32 (IL32). This chain is 2-aminoethanethiol dioxygenase (Ado), found in Mus musculus (Mouse).